A 425-amino-acid chain; its full sequence is Polyribonucleotide 5'-hydroxyl-kinase Clp1 (425 aa).

Residues Glu-22, Lys-62, and 124 to 129 each bind ATP; that span reads DVGKST.

This sequence belongs to the Clp1 family. Clp1 subfamily. In terms of assembly, component of the tRNA splicing endonuclease complex. Component of pre-mRNA cleavage complex II (CF-II).

The protein resides in the nucleus. It carries out the reaction a 5'-end dephospho-2'-deoxyribonucleoside-DNA + ATP = a 5'-end 5'-phospho-2'-deoxyribonucleoside-DNA + ADP + H(+). It catalyses the reaction a 5'-end dephospho-ribonucleoside-RNA + ATP = a 5'-end 5'-phospho-ribonucleoside-RNA + ADP + H(+). Its function is as follows. Polynucleotide kinase that can phosphorylate the 5'-hydroxyl groups of double-stranded RNA (dsRNA), single-stranded RNA (ssRNA), double stranded DNA (dsDNA) and double-stranded DNA:RNA hybrids. dsRNA is phosphorylated more efficiently than dsDNA, and the RNA component of a DNA:RNA hybrid is phosphorylated more efficiently than the DNA component. Plays a role in both tRNA splicing and mRNA 3'-end formation. Component of the tRNA splicing endonuclease complex: phosphorylates the 5'-terminus of the tRNA 3'-exon during tRNA splicing; this phosphorylation event is a prerequisite for the subsequent ligation of the two exon halves and the production of a mature tRNA. Its role in tRNA splicing and maturation is required for cerebellar development. Component of the pre-mRNA cleavage complex II (CF-II), which seems to be required for mRNA 3'-end formation. Also phosphorylates the 5'-terminus of exogenously introduced short interfering RNAs (siRNAs), which is a necessary prerequisite for their incorporation into the RNA-induced silencing complex (RISC). However, endogenous siRNAs and microRNAs (miRNAs) that are produced by the cleavage of dsRNA precursors by dicer1 already contain a 5'-phosphate group, so this protein may be dispensible for normal RNA-mediated gene silencing. The polypeptide is Polyribonucleotide 5'-hydroxyl-kinase Clp1 (Gallus gallus (Chicken)).